The sequence spans 611 residues: Chaperone protein DnaK (611 aa).

Thr-173 is modified (phosphothreonine; by autocatalysis). Positions 577–592 are enriched in low complexity; it reads QAAAGQAEGAEGAQDA. The disordered stretch occupies residues 577 to 598; that stretch reads QAAAGQAEGAEGAQDAGAKKDN.

Belongs to the heat shock protein 70 family.

Functionally, acts as a chaperone. This is Chaperone protein DnaK from Bacillus anthracis (strain A0248).